The sequence spans 143 residues: Small ribosomal subunit protein uS9 (143 aa).

Residues 124-143 are disordered; it reads PEPKKFGGKGARARFQKSYR. Basic residues predominate over residues 134–143; the sequence is ARARFQKSYR.

Belongs to the universal ribosomal protein uS9 family.

The polypeptide is Small ribosomal subunit protein uS9 (RPS16) (Candida glabrata (strain ATCC 2001 / BCRC 20586 / JCM 3761 / NBRC 0622 / NRRL Y-65 / CBS 138) (Yeast)).